The following is a 2293-amino-acid chain: RNA-directed RNA polymerase L (2293 aa).

A RdRp catalytic domain is found at threonine 1111 to cysteine 1297.

It carries out the reaction RNA(n) + a ribonucleoside 5'-triphosphate = RNA(n+1) + diphosphate. Its function is as follows. RNA-dependent RNA polymerase which is responsible for replication and transcription of the viral RNA genome. The sequence is that of RNA-directed RNA polymerase L (RdRp) from Eriophyes pyri (pearleaf blister mite).